A 435-amino-acid chain; its full sequence is Glutamyl-tRNA reductase (435 aa).

Residues 49-52 (TCNR), S109, 114-116 (ETQ), and Q120 each bind substrate. Residue C50 is the Nucleophile of the active site. 189–194 (GAGEMS) contributes to the NADP(+) binding site.

Belongs to the glutamyl-tRNA reductase family. In terms of assembly, homodimer.

The catalysed reaction is (S)-4-amino-5-oxopentanoate + tRNA(Glu) + NADP(+) = L-glutamyl-tRNA(Glu) + NADPH + H(+). It participates in porphyrin-containing compound metabolism; protoporphyrin-IX biosynthesis; 5-aminolevulinate from L-glutamyl-tRNA(Glu): step 1/2. In terms of biological role, catalyzes the NADPH-dependent reduction of glutamyl-tRNA(Glu) to glutamate 1-semialdehyde (GSA). In Listeria monocytogenes serovar 1/2a (strain ATCC BAA-679 / EGD-e), this protein is Glutamyl-tRNA reductase.